We begin with the raw amino-acid sequence, 209 residues long: Large ribosomal subunit protein uL3 (209 aa).

Q150 is subject to N5-methylglutamine.

The protein belongs to the universal ribosomal protein uL3 family. As to quaternary structure, part of the 50S ribosomal subunit. Forms a cluster with proteins L14 and L19. Methylated by PrmB.

One of the primary rRNA binding proteins, it binds directly near the 3'-end of the 23S rRNA, where it nucleates assembly of the 50S subunit. The chain is Large ribosomal subunit protein uL3 from Vibrio cholerae serotype O1 (strain ATCC 39541 / Classical Ogawa 395 / O395).